The chain runs to 471 residues: ATP synthase subunit beta (471 aa).

Position 154–161 (154–161 (GGAGVGKT)) interacts with ATP.

It belongs to the ATPase alpha/beta chains family. As to quaternary structure, F-type ATPases have 2 components, CF(1) - the catalytic core - and CF(0) - the membrane proton channel. CF(1) has five subunits: alpha(3), beta(3), gamma(1), delta(1), epsilon(1). CF(0) has three main subunits: a(1), b(2) and c(9-12). The alpha and beta chains form an alternating ring which encloses part of the gamma chain. CF(1) is attached to CF(0) by a central stalk formed by the gamma and epsilon chains, while a peripheral stalk is formed by the delta and b chains.

The protein resides in the cell membrane. It catalyses the reaction ATP + H2O + 4 H(+)(in) = ADP + phosphate + 5 H(+)(out). Produces ATP from ADP in the presence of a proton gradient across the membrane. The catalytic sites are hosted primarily by the beta subunits. The chain is ATP synthase subunit beta from Mesomycoplasma hyopneumoniae (strain J / ATCC 25934 / NCTC 10110) (Mycoplasma hyopneumoniae).